The sequence spans 445 residues: Beclin-1 (445 aa).

The BH3 motif lies at 103-122 (TMENLSRRLKVTGDLFDIMS). A coiled-coil region spans residues 137–264 (DTLLDQLDTQ…QLDKLKKTNV (128 aa)). An evolutionary conserved domain (ECD) region spans residues 240–445 (DDLKSVENQM…AWVSSQFYNK (206 aa)). The tract at residues 420–445 (WTKALKFMLTNLKWGLAWVSSQFYNK) is required for membrane-association.

The protein belongs to the beclin family. As to quaternary structure, component of the PI3K (PI3KC3/PI3K-III/class III phosphatidylinositol 3-kinase) complex. May be proteolytically processed by caspases; the C-terminal fragment(s) may induce apoptosis.

It localises to the cytoplasm. The protein resides in the golgi apparatus. It is found in the trans-Golgi network membrane. Its subcellular location is the endosome membrane. The protein localises to the endoplasmic reticulum membrane. It localises to the mitochondrion membrane. The protein resides in the cytoplasmic vesicle. It is found in the autophagosome. Plays a central role in autophagy. Acts as core subunit of different PI3K complex forms that mediate formation of phosphatidylinositol 3-phosphate and are believed to play a role in multiple membrane trafficking pathways: PI3KC3-C1 is involved in initiation of autophagosomes and PI3KC3-C2 in maturation of autophagosomes and endocytosis. Involved in regulation of degradative endocytic trafficking and required for the abscission step in cytokinesis, probably in the context of PI3KC3-C2. Essential for the formation of PI3KC3-C2 but not PI3KC3-C1 PI3K complex forms. Involved in endocytosis including endosome formation in neuronal cells. The sequence is that of Beclin-1 (becn1) from Xenopus laevis (African clawed frog).